A 684-amino-acid polypeptide reads, in one-letter code: RNA helicase NPH-II (684 aa).

Residues 184–359 (FRAWAARRPT…EFFPDAEFVH (176 aa)) form the Helicase ATP-binding domain. Residue 197 to 204 (GGTGVGKT) participates in ATP binding. A DEXH box motif is present at residues 308 to 311 (DEVH). Residues 392 to 563 (NVSAALSAHR…DLYVQPSDLE (172 aa)) enclose the Helicase C-terminal domain.

Belongs to the DEAD box helicase family. DEAH subfamily. In terms of assembly, monomer.

The protein localises to the virion. It catalyses the reaction ATP + H2O = ADP + phosphate + H(+). Functionally, NTP-dependent helicase that catalyzes unidirectional unwinding of 3'tailed duplex RNAs and plays an important role during transcription of early mRNAs, presumably by preventing R-loop formation behind the elongating RNA polymerase. Might also play a role in the export of newly synthesized mRNA chains out of the core into the cytoplasm. Required for replication and propagation of viral particles. The polypeptide is RNA helicase NPH-II (NPH2) (Homo sapiens (Human)).